A 446-amino-acid chain; its full sequence is MKFRNNLTLYLIFIIVFTIYISLTISIPLKNGKFWHITDTHYDFMYIEGGDEDKQCREVTYKSKYEKGGASSIGNYKCDTSFELLQSSFEYMVKHEEKPDFIIWTGDDPPHLGNSQLNETLVLQSITNMTNLIKGYFPDIPIFPSIGNHDSYPQHQIGVGPNWLFENVAQLWSPFLSNDSIETFKLGGYYTELVSEGFRIISLNTVFYYNENRQCLNLTDPAGQLLWLNETLANASLAGERVWIIGHVPPGYNEKYDVFNFHKQFNDEYLFSFSQYSDIIEFHIYGHEHTDTFRLFYDDPNDHINDIEPTGIMFLSPSLTPWMNQFLPALPNNPGLRLYEYNITSFALLDYYQFWTNLTDNIISGNIDWQLEYRATEFFNTFNLSPVSMYEAYLLIQSVTSQLLKFHFYNSVSYPTKGCDEICKKIQLCSIRHPFTKGFKECLVEI.

Positions 1 to 26 (MKFRNNLTLYLIFIIVFTIYISLTIS) are cleaved as a signal peptide. N6 carries an N-linked (GlcNAc...) asparagine glycan. Zn(2+) is bound by residues D39 and H41. A disulfide bond links C56 and C78. D107 provides a ligand contact to Zn(2+). N-linked (GlcNAc...) asparagine glycans are attached at residues N118 and N128. N148 lines the Zn(2+) pocket. N-linked (GlcNAc...) asparagine glycans are attached at residues N178, N217, N229, and N234. Residues H247, H287, and H289 each contribute to the Zn(2+) site. N342 and N357 each carry an N-linked (GlcNAc...) asparagine glycan. C429 and C442 are joined by a disulfide.

It belongs to the acid sphingomyelinase family. Requires Zn(2+) as cofactor.

It localises to the secreted. This chain is Sphingomyelinase phosphodiesterase C (sgmC), found in Dictyostelium discoideum (Social amoeba).